Consider the following 778-residue polypeptide: Gelsolin (778 aa).

A signal peptide spans 1-23 (MGKQGFGYIFLTIFCTMALKLNC). The actin-severing stretch occupies residues 49 to 172 (MVEHAEFSKA…YKAGGVASGF (124 aa)). The Gelsolin-like 1 repeat unit spans residues 72 to 154 (FDLVPVPKNL…VQGHESSTFL (83 aa)). Ca(2+) contacts are provided by Gly88, Asp89, Glu120, Asp132, Gly137, and Ala139. The tract at residues 119–122 (DERG) is actin-actin interfilament contact point. A 1,2-diacyl-sn-glycero-3-phospho-(1D-myo-inositol-4,5-bisphosphate) is bound at residue 158–165 (KSGIKYKA). Val168 provides a ligand contact to Ca(2+). Residue 184-192 (RLLQVKGRR) participates in a 1,2-diacyl-sn-glycero-3-phospho-(1D-myo-inositol-4,5-bisphosphate) binding. Residues 193–266 (TVRATEVPVS…SEEGAEREEM (74 aa)) form a Gelsolin-like 2 repeat. Residues Gly209 and Asp210 each coordinate Ca(2+). Cys211 and Cys224 are joined by a disulfide. Glu232, Asp282, Glu325, Asp326, Glu350, Gly467, Asp468, Glu498, Asp510, Gly515, Pro517, Thr547, Asn587, Asp588, Glu610, Asp692, Asp693, and Glu715 together coordinate Ca(2+). Gelsolin-like repeat units follow at residues 313–385 (DENP…TPLF) and 451–532 (SEKV…PHLM). Residues 430–778 (AAQHGMEDDG…LQRAMADVDV (349 aa)) form an actin-binding, Ca-sensitive region. Gelsolin-like repeat units lie at residues 574–638 (AVEL…DNFW) and 677–752 (IEEV…PPTF).

The protein belongs to the villin/gelsolin family. In terms of assembly, binds to actin and to fibronectin. Highly expressed in homogene cells of the basilar papilla. Also detected in subcutaneous layer of the skin.

The protein resides in the secreted. The protein localises to the cytoplasm. Its subcellular location is the cytoskeleton. Calcium-regulated, actin-modulating protein that binds to the plus (or barbed) ends of actin monomers or filaments, preventing monomer exchange (end-blocking or capping). It can promote the assembly of monomers into filaments (nucleation) as well as sever filaments already formed. Plays a role in ciliogenesis. The polypeptide is Gelsolin (GSN) (Gallus gallus (Chicken)).